The primary structure comprises 612 residues: Chaperone protein DnaK (612 aa).

Residue Thr174 is modified to Phosphothreonine; by autocatalysis. The disordered stretch occupies residues Gly579–Lys612. Over residues Ala581–Asp597 the composition is skewed to gly residues. Basic and acidic residues predominate over residues Ala603–Lys612.

This sequence belongs to the heat shock protein 70 family.

Functionally, acts as a chaperone. The chain is Chaperone protein DnaK from Symbiobacterium thermophilum (strain DSM 24528 / JCM 14929 / IAM 14863 / T).